Here is a 1076-residue protein sequence, read N- to C-terminus: ESX secretion system protein YueB (1076 aa).

Residues 9–29 (IKLISAVIIILLLPVLFFRFI) traverse the membrane as a helical segment. Disordered regions lie at residues 372 to 404 (RLSL…DIED) and 423 to 552 (IKDI…ETDI). The span at 423–439 (IKDISEGLKEPEQEKPT) shows a compositional bias: basic and acidic residues. 2 stretches are compositionally biased toward polar residues: residues 449–495 (DDSP…NIET) and 503–522 (SKNV…SKTD). The stretch at 552-622 (ISGAKKRLNE…TKKLVDFDNN (71 aa)) forms a coiled coil. Transmembrane regions (helical) follow at residues 904–924 (TVPP…IGYF), 938–958 (ALFG…GLNI), 964–984 (DQTI…SAFI), 995–1015 (GWVA…DLIM), and 1040–1060 (TMGI…PLII).

The protein belongs to the EsaA family.

Its subcellular location is the cell membrane. Required for YukE secretion. Probable component or regulator of the ESX/ESAT-6-like secretion system (BsEss). Bacteriophage SPP1 receptor. Essential for the irreversible adsorption of the bacteriophage. This Bacillus subtilis (strain 168) protein is ESX secretion system protein YueB (yueB).